The sequence spans 540 residues: Chaperonin GroEL 2 (540 aa).

ATP-binding positions include 30 to 33, K51, 87 to 91, G415, 479 to 481, and D495; these read TLGP, DGTTT, and NAA.

This sequence belongs to the chaperonin (HSP60) family. Forms a cylinder of 14 subunits composed of two heptameric rings stacked back-to-back. Interacts with the co-chaperonin GroES.

Its subcellular location is the cytoplasm. It catalyses the reaction ATP + H2O + a folded polypeptide = ADP + phosphate + an unfolded polypeptide.. Its function is as follows. Together with its co-chaperonin GroES, plays an essential role in assisting protein folding. The GroEL-GroES system forms a nano-cage that allows encapsulation of the non-native substrate proteins and provides a physical environment optimized to promote and accelerate protein folding. The chain is Chaperonin GroEL 2 from Burkholderia vietnamiensis (strain G4 / LMG 22486) (Burkholderia cepacia (strain R1808)).